A 1529-amino-acid polypeptide reads, in one-letter code: MVVILWGWNENRFNTLDQVISFDFIEENKKLYLKILENEKQQKIYNISNLIGRRMDNYRDNNNNNGNGSNINNNGIIINSSMGSQYFNLNKGIIIVESDNETFLIEEIDYLGKFPILKQFIKCEEFIGISTLEIISNIEKQLSNLVNLKSNTTEQTDRKYKTNLIDFKESIIQLEKDCKNLLKQSNLINPSIKYSVVKSVKFLLKEIKFEFYHGDINIKRIELFQQLKKFLKIHFWNNPNLILNSGSNIDMTDSNDSISSEEINSPNDLNLSLSSFPSISSPSNSSYNNINTLTFSNNNNNNNNNSNNNNNNNNNNNNNNSIINSNNNNNSNNNSNISNSSNNNNNNSNNSNNISINVSKTGNNSVINSPTQSSSCYIDCDDTMSNYTDCTNTTNTNSTTTTTTTTTTYGNNLNVYNNNNNNNTNNNNNNVPYKKPALKMMKSPSFKIQLIQEVYLEIMDQCKKIQNYLYELLDTYLTDEEYINNNNNNNNKDISILFENNTSYCIAQEIFISLIKNSNDFLYQVQLIDLTDTRKKSKELSEVSNQLFYSTQQLFPSISDHLDFIEMDIFTNNNTTTTTTTTTTTTNTTTNPSNTIKSSHSSLLSSSYSSSKDDDIVLTINKVLSKLDTFSKEYTKLIGNNLSSNYYVDSGNNNESVSSPKCGLFLSHSLSTDSPMTYVKRNTSSGSSASTSSYTTPVSSSASLSFSSSTQTPSSAASQHHIQQILQQQQQQQQQQQQQQQQQQPQQIQSQSQQQHQQQQQQQQQQQQQQQQQQQQQQQQQQQQIQSQSQQQQQLNRKPHYSSISPTSMLVYNATGGKFGVVNQNNNSAESTPTFQLNTMDILNSLMGKEGQNSNTNNANNPNNNNNNNNNNNNNNNNNNNNNNNNENKNENKNETNKSGHNYNNSSTSTLSSSTTIGDLANVSSTNSPNSSTPNLLLPPHQFHNHNREYNHSHHHLLSSSSNNVMINNRSIGKSFSTGNFSQPQPIMPSNGIGGSGGGGLGTTLSVGNGGIVGGLQSRSSSFEENQLQYAIESFMEVYNHLTSKDKVDTSIWLEEEKEDINVYYINNTNIDDKFYRSIKYASLNQLILKLTCESNTELRFTKTFITTYRSFTTGDIFLMKLIQRYFTPNLKNIVPYQFVQKIQIPIQLRVLNVLRLWIEQYPSDFQQPPQITTQSTQPIQNSTTQPQPQPQPQQPQPQLQQSTNLQNSTIQQPSLFKMLTAFLNSTRRNGHGQYSDLILKKFKQQKQKDRLQLPIINNGQGIPKAKIFWMKYSTEFIFSQSSTDIAEQLTLLDFDSYKSIEEIELLNQAWSKPDQKTNTPNIASMVNRFNSFSSFVSWAILRENDIKQRSKMMLKMIKICYALYKLSNFNGLLAGLSGLMASGVYRLNHTKSLISKQYQKKFDFLCKFLDTKKSHKVYRDIIHSTCPPLIPYLGIYLTDLTFIEDGNQDEIKGLINFKKREMIFNTILEIQQYQQQGYTIKPKPSVLGFLCELPHMSDKKKFEDDTYEQSILLEPKNSTKLEVMNAKK.

Positions 135–186 form a coiled coil; sequence ISNIEKQLSNLVNLKSNTTEQTDRKYKTNLIDFKESIIQLEKDCKNLLKQSN. Disordered regions lie at residues 290-357, 576-600, 680-724, 847-948, and 1168-1206; these read INTL…ISIN, TTTTTTTTTTTNTTTNPSNTIKSSH, KRNT…HIQQ, MGKE…NHNR, and QPPQITTQSTQPIQNSTTQPQPQPQPQQPQPQLQQSTNL. 3 stretches are compositionally biased toward low complexity: residues 576–591, 683–724, and 853–887; these read TTTTTTTTTTTNTTTN, TSSG…HIQQ, and NSNTNNANNPNNNNNNNNNNNNNNNNNNNNNNNNE. 2 coiled-coil regions span residues 722-798 and 871-898; these read IQQI…LNRK and NNNNNNNNNNNNNNNNENKNENKNETNK. The span at 888–898 shows a compositional bias: basic and acidic residues; that stretch reads NKNENKNETNK. Low complexity-rich tracts occupy residues 906–916, 924–940, 1168–1187, and 1197–1206; these read SSTSTLSSSTT, SSTNSPNSSTPNLLLPP, QPPQITTQSTQPIQNSTTQP, and QPQLQQSTNL. Residues 1075–1205 form the N-terminal Ras-GEF domain; that stretch reads FYRSIKYASL…PQPQLQQSTN (131 aa). Positions 1282 to 1517 constitute a Ras-GEF domain; sequence SSTDIAEQLT…YEQSILLEPK (236 aa).

It localises to the cytoplasm. Functionally, promotes the exchange of Ras-bound GDP by GTP. Involved in phagocytosis, fluid-phase endocytosis, regulation of macropinocytosis and control of cell movement. The polypeptide is Ras guanine nucleotide exchange factor B (gefB) (Dictyostelium discoideum (Social amoeba)).